The sequence spans 708 residues: uncharacterized protein (708 aa).

Disordered stretches follow at residues 1–79 (MHAR…RRSS), 119–301 (AGEF…IHQR), 349–390 (YLSH…GDEN), and 410–461 (SNSF…KRQR). Positions 65–74 (LPPPLPPPPV) are enriched in pro residues. Polar residues predominate over residues 238-249 (DEAQSKTGSSSA). The segment covering 260–274 (SKVSEGSSSLSAGSG) has biased composition (low complexity). Residues 410 to 419 (SNSFPSSILR) show a composition bias toward polar residues. A compositionally biased stretch (basic and acidic residues) spans 442–461 (VGEKRPGEGSDLEEGSKRQR).

This is an uncharacterized protein from Arabidopsis thaliana (Mouse-ear cress).